Reading from the N-terminus, the 318-residue chain is Methionyl-tRNA formyltransferase (318 aa).

A (6S)-5,6,7,8-tetrahydrofolate-binding site is contributed by 117–120; the sequence is SLLP.

It belongs to the Fmt family.

It carries out the reaction L-methionyl-tRNA(fMet) + (6R)-10-formyltetrahydrofolate = N-formyl-L-methionyl-tRNA(fMet) + (6S)-5,6,7,8-tetrahydrofolate + H(+). In terms of biological role, attaches a formyl group to the free amino group of methionyl-tRNA(fMet). The formyl group appears to play a dual role in the initiator identity of N-formylmethionyl-tRNA by promoting its recognition by IF2 and preventing the misappropriation of this tRNA by the elongation apparatus. The sequence is that of Methionyl-tRNA formyltransferase from Malacoplasma penetrans (strain HF-2) (Mycoplasma penetrans).